The chain runs to 64 residues: Large ribosomal subunit protein bL35 (64 aa).

A compositionally biased stretch (basic residues) spans 1–15 (MPKNKTHSGASKRFR). The disordered stretch occupies residues 1-20 (MPKNKTHSGASKRFRVTGSG).

It belongs to the bacterial ribosomal protein bL35 family.

The chain is Large ribosomal subunit protein bL35 from Nocardioides sp. (strain ATCC BAA-499 / JS614).